Consider the following 46-residue polypeptide: Large ribosomal subunit protein bL34c (46 aa).

The protein belongs to the bacterial ribosomal protein bL34 family.

It is found in the plastid. It localises to the chloroplast. This chain is Large ribosomal subunit protein bL34c, found in Pyropia yezoensis (Susabi-nori).